We begin with the raw amino-acid sequence, 180 residues long: ATP-dependent protease subunit HslV (180 aa).

Threonine 8 is a catalytic residue. Na(+) is bound by residues alanine 165, cysteine 168, and threonine 171.

It belongs to the peptidase T1B family. HslV subfamily. In terms of assembly, a double ring-shaped homohexamer of HslV is capped on each side by a ring-shaped HslU homohexamer. The assembly of the HslU/HslV complex is dependent on binding of ATP.

It is found in the cytoplasm. The catalysed reaction is ATP-dependent cleavage of peptide bonds with broad specificity.. Allosterically activated by HslU binding. In terms of biological role, protease subunit of a proteasome-like degradation complex believed to be a general protein degrading machinery. In Staphylococcus epidermidis (strain ATCC 12228 / FDA PCI 1200), this protein is ATP-dependent protease subunit HslV.